A 495-amino-acid polypeptide reads, in one-letter code: Tripartite motif-containing protein 5 (495 aa).

At alanine 2 the chain carries N-acetylalanine. The segment at 15 to 60 (CPICLELLTEPLSLPCGHSFCQACITANHKKSMLYKEEERSCPVCR) adopts an RING-type zinc-finger fold. Serine 87 carries the post-translational modification Phosphoserine. The B box-type zinc-finger motif lies at 92-133 (QKVDHCARHGEKLLLFCQEDRKVICWLCERSQEHRGHHTFLM). Residues cysteine 97, histidine 100, cysteine 119, and histidine 125 each coordinate Zn(2+). Residues 137–177 (AQEYHVKLQTALEMLRQKQQEAEKLEADIREEKASWKIQID) are a coiled coil. Positions 187–200 (FEQLREILDWEESN) are required for interaction with GABARAP and for autophagy. Residues 283–495 (LKGMLDMFRE…VPMTLCSPSS (213 aa)) enclose the B30.2/SPRY domain.

This sequence belongs to the TRIM/RBCC family. In terms of assembly, can form homodimers and homotrimers. In addition to lower-order dimerization, also exhibits a higher-order multimerization and both low- and high-order multimerizations are essential for its restriction activity. Interacts with BTBD1 and BTBD2. Interacts with PSMC4, PSMC5, PSMD7 and HSPA8/HSC70. Interacts (via B30.2/SPRY domain) with HSPA1A/B. Interacts with PSMC2, MAP3K7/TAK1, TAB2 and TAB3. Interacts with SQSTM1. Interacts with TRIM6 and TRIM34. Interacts with ULK1 (phosphorylated form), GABARAP, GABARAPL1, GABARAPL2, MAP1LC3A, MAP1LC3C and BECN1. In terms of processing, degraded in a proteasome-independent fashion in the absence of viral infection but in a proteasome-dependent fashion following exposure to restriction sensitive virus. Post-translationally, autoubiquitinated in a RING finger- and UBE2D2-dependent manner. Monoubiquitinated by TRIM21. Deubiquitinated by Yersinia YopJ. Ubiquitination may not lead to proteasomal degradation.

The protein resides in the cytoplasm. Its subcellular location is the nucleus. The enzyme catalyses S-ubiquitinyl-[E2 ubiquitin-conjugating enzyme]-L-cysteine + [acceptor protein]-L-lysine = [E2 ubiquitin-conjugating enzyme]-L-cysteine + N(6)-ubiquitinyl-[acceptor protein]-L-lysine.. It functions in the pathway protein modification; protein ubiquitination. In terms of biological role, capsid-specific restriction factor that prevents infection from non-host-adapted retroviruses. Blocks viral replication early in the life cycle, after viral entry but before reverse transcription. In addition to acting as a capsid-specific restriction factor, also acts as a pattern recognition receptor that activates innate immune signaling in response to the retroviral capsid lattice. Binding to the viral capsid triggers its E3 ubiquitin ligase activity, and in concert with the heterodimeric ubiquitin conjugating enzyme complex UBE2V1-UBE2N (also known as UBC13-UEV1A complex) generates 'Lys-63'-linked polyubiquitin chains, which in turn are catalysts in the autophosphorylation of the MAP3K7/TAK1 complex (includes TAK1, TAB2, and TAB3). Activation of the MAP3K7/TAK1 complex by autophosphorylation results in the induction and expression of NF-kappa-B and MAPK-responsive inflammatory genes, thereby leading to an innate immune response in the infected cell. Plays a role in regulating autophagy through activation of autophagy regulator BECN1 by causing its dissociation from its inhibitors BCL2 and TAB2. The polypeptide is Tripartite motif-containing protein 5 (TRIM5) (Erythrocebus patas (Red guenon)).